We begin with the raw amino-acid sequence, 527 residues long: GMP synthase [glutamine-hydrolyzing] (527 aa).

Residues 13-202 (TILVLDFGSQ…AVDICGAAQK (190 aa)) enclose the Glutamine amidotransferase type-1 domain. Cysteine 89 serves as the catalytic Nucleophile. Residues histidine 176 and glutamate 178 contribute to the active site. A GMPS ATP-PPase domain is found at 203-402 (WSMENFVDTE…MGIPHDLVWR (200 aa)). 231–237 (SGGVDST) contacts ATP. 4 residues coordinate XMP: arginine 304, aspartate 464, lysine 519, and glutamate 525.

As to quaternary structure, homodimer. It depends on Mg(2+) as a cofactor.

It is found in the cytoplasm. The protein resides in the cytosol. The catalysed reaction is XMP + L-glutamine + ATP + H2O = GMP + L-glutamate + AMP + diphosphate + 2 H(+). It participates in purine metabolism; GMP biosynthesis; GMP from XMP (L-Gln route): step 1/1. Functionally, catalyzes the conversion of xanthine monophosphate (XMP) to GMP in the presence of glutamine and ATP through an adenyl-XMP intermediate. In Yarrowia lipolytica (strain CLIB 122 / E 150) (Yeast), this protein is GMP synthase [glutamine-hydrolyzing] (GUA1).